Here is a 527-residue protein sequence, read N- to C-terminus: Probable feruloyl esterase B-2 (527 aa).

Positions 1–19 (MAPIHYLLPIITLGSAALA) are cleaved as a signal peptide. 2 disulfide bridges follow: Cys-28–Cys-75 and Cys-63–Cys-114. Asn-53, Asn-85, Asn-98, Asn-138, and Asn-180 each carry an N-linked (GlcNAc...) asparagine glycan. 4 disulfides stabilise this stretch: Cys-187–Cys-441, Cys-256–Cys-273, Cys-282–Cys-291, and Cys-503–Cys-525. The active-site Acyl-ester intermediate is the Ser-188. Positions 257, 260, 262, 264, and 266 each coordinate Ca(2+). N-linked (GlcNAc...) asparagine glycosylation is found at Asn-311 and Asn-355. Residues Asp-400 and His-440 each act as charge relay system in the active site. The N-linked (GlcNAc...) asparagine glycan is linked to Asn-516.

Belongs to the tannase family.

The protein resides in the secreted. It carries out the reaction feruloyl-polysaccharide + H2O = ferulate + polysaccharide.. In terms of biological role, involved in degradation of plant cell walls. Hydrolyzes the feruloyl-arabinose ester bond in arabinoxylans as well as the feruloyl-galactose and feruloyl-arabinose ester bonds in pectin. This is Probable feruloyl esterase B-2 (faeB-2) from Aspergillus terreus (strain NIH 2624 / FGSC A1156).